A 217-amino-acid chain; its full sequence is Meiotically up-regulated gene 37 protein (217 aa).

Functionally, has a role in meiosis. The polypeptide is Meiotically up-regulated gene 37 protein (mug37) (Schizosaccharomyces pombe (strain 972 / ATCC 24843) (Fission yeast)).